We begin with the raw amino-acid sequence, 282 residues long: DegV domain-containing protein SpyM3_0586 (282 aa).

Residues 3-280 form the DegV domain; the sequence is LAVITDSTAT…EGAIAFGVTP (278 aa). The hexadecanoate site is built by Thr-61 and Ser-94.

Functionally, may bind long-chain fatty acids, such as palmitate, and may play a role in lipid transport or fatty acid metabolism. The polypeptide is DegV domain-containing protein SpyM3_0586 (Streptococcus pyogenes serotype M3 (strain ATCC BAA-595 / MGAS315)).